Here is a 63-residue protein sequence, read N- to C-terminus: Large ribosomal subunit protein uL30 (63 aa).

Belongs to the universal ribosomal protein uL30 family. In terms of assembly, part of the 50S ribosomal subunit.

In Rickettsia africae (strain ESF-5), this protein is Large ribosomal subunit protein uL30.